The sequence spans 689 residues: tRNA 5-methylaminomethyl-2-thiouridine biosynthesis bifunctional protein MnmC (689 aa).

Residues 1–245 (MNQRPIQTAT…KREMLTGTLP (245 aa)) are tRNA (mnm(5)s(2)U34)-methyltransferase. Positions 270-689 (IGGGIVSALT…RSPATQESSR (420 aa)) are FAD-dependent cmnm(5)s(2)U34 oxidoreductase.

The protein in the N-terminal section; belongs to the methyltransferase superfamily. tRNA (mnm(5)s(2)U34)-methyltransferase family. In the C-terminal section; belongs to the DAO family. The cofactor is FAD.

The protein localises to the cytoplasm. The catalysed reaction is 5-aminomethyl-2-thiouridine(34) in tRNA + S-adenosyl-L-methionine = 5-methylaminomethyl-2-thiouridine(34) in tRNA + S-adenosyl-L-homocysteine + H(+). Catalyzes the last two steps in the biosynthesis of 5-methylaminomethyl-2-thiouridine (mnm(5)s(2)U) at the wobble position (U34) in tRNA. Catalyzes the FAD-dependent demodification of cmnm(5)s(2)U34 to nm(5)s(2)U34, followed by the transfer of a methyl group from S-adenosyl-L-methionine to nm(5)s(2)U34, to form mnm(5)s(2)U34. This chain is tRNA 5-methylaminomethyl-2-thiouridine biosynthesis bifunctional protein MnmC, found in Yersinia pestis.